We begin with the raw amino-acid sequence, 111 residues long: Nucleoid-associated protein LBA0378 (111 aa).

Belongs to the YbaB/EbfC family. Homodimer.

It localises to the cytoplasm. The protein resides in the nucleoid. Its function is as follows. Binds to DNA and alters its conformation. May be involved in regulation of gene expression, nucleoid organization and DNA protection. The chain is Nucleoid-associated protein LBA0378 from Lactobacillus acidophilus (strain ATCC 700396 / NCK56 / N2 / NCFM).